The following is a 453-amino-acid chain: MAYQMASLKLEMNEVVHVKPSKPTPSIVLPLSTLDHRPYPDSIWPIVHVYRSASNGKLDPAFVLKQALSKALVYYYPLAGKLVKQPDGKVAINCNNDGVPFLEAIANCNLSSLNYLDDHDILIAKQLVFDLHLQDENEYPHPVSFKLTKFQCGGFTIGMSTSHIVCDGWGACQFFRAIVELASGKSEPFVKPVWERERLIGSITTQPMPNPMDEATAAVSPFLPATDVMYELFKVDKESIRRLKMSLMKEISGNETMEQGFTSFESLAAYVWRSRARALNLNNEGKTLLVFSVQVRQHMSPPLSDGYYGTAITEGQVVLTMKELNEKPLSDIVKLVKESKNIAFTGDFIKNTIDTLESNPENFNVEEGPGATLALSDWKHLGFMPNVDFGWKEPINMVPAPCNMFEYEGLCIFLSPSKYDPSMEGGVRVFISLPSVAMPKFREEMEALKVTTP.

Residues His-163 and Asp-388 each act as proton acceptor in the active site.

Belongs to the plant acyltransferase family. In terms of assembly, monomer.

It catalyses the reaction tetrahydroanabasine + acetyl-CoA = ammodendrine + CoA. It functions in the pathway alkaloid biosynthesis. In terms of biological role, tetrahydroanabasine acetyltransferase involved in the accumulation of quinolizidine type antinutritional alkaloids (QAs). QAs impart a bitter taste to plants, acting as repellents and toxicants for herbivores and predators, and possess a variety of pharmacological effects, including sedative, anticonvulsant, anti-inflammatory, antiviral, antitumor, antipyretic, anti-hepatitis B, antifibrotic, antiallergic, antidiarrheal, analgesic and antimicrobial activities. Mediates the conversion of tetrahydroanabasine into ammodendrine. The sequence is that of Tetrahydroanabasine acetyltransferase from Lupinus angustifolius (Narrow-leaved blue lupine).